The following is a 574-amino-acid chain: Septation ring formation regulator EzrA (574 aa).

Over 1 to 7 (MSSGIIL) the chain is Extracellular. The chain crosses the membrane as a helical span at residues 8–26 (LIVAIVLLVIIAYLVGVII). The Cytoplasmic segment spans residues 27–574 (RKRNDTLITS…YEKTRERIRF (548 aa)). 4 coiled-coil regions span residues 102–131 (NFIRAKHEINSVESQLNLVEEDITAIREAL), 161–190 (ENEDNFGSTMAEIEKQMKNIEAEFSQFVAL), 276–379 (VTLD…QQEK), and 459–493 (QLEALMDELSRGRINIEAVSRLSEVATAAIANLEE).

This sequence belongs to the EzrA family.

The protein resides in the cell membrane. Functionally, negative regulator of FtsZ ring formation; modulates the frequency and position of FtsZ ring formation. Inhibits FtsZ ring formation at polar sites. Interacts either with FtsZ or with one of its binding partners to promote depolymerization. In Streptococcus equi subsp. zooepidemicus (strain H70), this protein is Septation ring formation regulator EzrA.